A 339-amino-acid polypeptide reads, in one-letter code: Cathepsin B (339 aa).

Residues 1–17 (MWQLWASLCCLLVLANA) form the signal peptide. Positions 18–79 (RSRPSFHPLS…QRVMFTEDLK (62 aa)) are cleaved as a propeptide — activation peptide. 6 disulfides stabilise this stretch: Cys93–Cys122, Cys105–Cys150, Cys141–Cys207, Cys142–Cys146, Cys179–Cys211, and Cys187–Cys198. Cys108 is an active-site residue. An N-linked (GlcNAc...) asparagine glycan is attached at Asn192. Lys220 is subject to N6-acetyllysine. Residues His278 and Asn298 contribute to the active site. A propeptide spanning residues 334–339 (QYWEKI) is cleaved from the precursor.

This sequence belongs to the peptidase C1 family. In terms of assembly, dimer of a heavy chain and a light chain cross-linked by a disulfide bond. Interacts with SRPX2. Directly interacts with SHKBP1. In terms of tissue distribution, expressed in the stratum spinosum of the epidermis. Weak expression is detected in the stratum granulosum.

The protein resides in the lysosome. Its subcellular location is the melanosome. It is found in the secreted. The protein localises to the extracellular space. It localises to the apical cell membrane. The enzyme catalyses Hydrolysis of proteins with broad specificity for peptide bonds. Preferentially cleaves -Arg-Arg-|-Xaa bonds in small molecule substrates (thus differing from cathepsin L). In addition to being an endopeptidase, shows peptidyl-dipeptidase activity, liberating C-terminal dipeptides.. Its activity is regulated as follows. Inhibited by leupeptin. In terms of biological role, thiol protease which is believed to participate in intracellular degradation and turnover of proteins. Cleaves matrix extracellular phosphoglycoprotein MEPE. Involved in the solubilization of cross-linked TG/thyroglobulin in the thyroid follicle lumen. Has also been implicated in tumor invasion and metastasis. The protein is Cathepsin B (CTSB) of Homo sapiens (Human).